The sequence spans 503 residues: Glycoprotein 3-alpha-L-fucosyltransferase A (503 aa).

Residues 1-10 (MRRPKISLKK) lie on the Cytoplasmic side of the membrane. A helical; Signal-anchor for type II membrane protein transmembrane segment spans residues 11–28 (YFYLTLICALLLIFGFSL). Residues 29 to 503 (KEREIWKTLS…KDVISDSSDD (475 aa)) lie on the Lumenal side of the membrane. The segment at 44-71 (ITTQQQQHQHLHQLQSMDEEHPMATSST) is disordered. Positions 47 to 58 (QQQQHQHLHQLQ) are enriched in low complexity. N-linked (GlcNAc...) asparagine glycans are attached at residues asparagine 262, asparagine 295, and asparagine 299.

Belongs to the glycosyltransferase 10 family. The cofactor is Mn(2+).

It is found in the golgi apparatus. The protein localises to the golgi stack membrane. It catalyses the reaction N(4)-{beta-D-GlcNAc-(1-&gt;2)-alpha-D-Man-(1-&gt;3)-[beta-D-GlcNAc-(1-&gt;2)-alpha-D-Man-(1-&gt;6)]-beta-D-Man-(1-&gt;4)-beta-D-GlcNAc-(1-&gt;4)-beta-D-GlcNAc}-L-asparaginyl-[protein] + GDP-beta-L-fucose = N(4)-{beta-D-GlcNAc-(1-&gt;2)-alpha-D-Man-(1-&gt;3)-[beta-D-GlcNAc-(1-&gt;2)-alpha-D-Man-(1-&gt;6)]-beta-D-Man-(1-&gt;4)-beta-D-GlcNAc-(1-&gt;4)-[alpha-L-Fuc(1-&gt;3)]-beta-D-GlcNAc}-L-asparaginyl-[protein] + GDP + H(+). The protein operates within protein modification; protein glycosylation. Its function is as follows. Catalyzes alpha-1,3 glycosidic linkages of N-glycans. Plays a role in neuronal development by promoting ventral nerve cord formation, possibly by promoting interactions between migrating cells and the extracellular matrix or by promoting neural activity. The chain is Glycoprotein 3-alpha-L-fucosyltransferase A (FucTA) from Drosophila melanogaster (Fruit fly).